We begin with the raw amino-acid sequence, 288 residues long: NAD(P)H quinone oxidoreductase YCP4 (288 aa).

Positions 3 to 192 (IAIIQYSTYG…EIAEKQGEAF (190 aa)) constitute a Flavodoxin-like domain. Residues 9 to 13 (STYGH) and 110 to 164 (VFVS…SPYG) contribute to the FMN site. A disordered region spans residues 202-288 (GSKKTNTTTT…KSSCSKCIIM (87 aa)). Residues 205–254 (KTNTTTTSKSAATSDAAGTTSGTAAGTSAATGAATGTSAPKESTKEASSS) show a composition bias toward low complexity. Residues 261–288 (NGTATRTQQSTKAPETAEKSSCSKCIIM) show a composition bias toward polar residues.

Belongs to the WrbA family. FMN serves as cofactor.

The protein resides in the cell membrane. It catalyses the reaction a quinone + NADH + H(+) = a quinol + NAD(+). The catalysed reaction is a quinone + NADPH + H(+) = a quinol + NADP(+). Flavodoxin-like protein (FLP) that plays a role in cell wall integrity, oxidative stress protection and virulence. FLPs act as NAD(P)H quinone oxidoreductases. Reduces ubiquinone (coenzyme Q), enabling it to serve as an antioxidant in the membrane. The sequence is that of NAD(P)H quinone oxidoreductase YCP4 from Candida albicans (strain SC5314 / ATCC MYA-2876) (Yeast).